The chain runs to 211 residues: ATP phosphoribosyltransferase (211 aa).

Belongs to the ATP phosphoribosyltransferase family. Short subfamily. In terms of assembly, heteromultimer composed of HisG and HisZ subunits.

It localises to the cytoplasm. It carries out the reaction 1-(5-phospho-beta-D-ribosyl)-ATP + diphosphate = 5-phospho-alpha-D-ribose 1-diphosphate + ATP. Its pathway is amino-acid biosynthesis; L-histidine biosynthesis; L-histidine from 5-phospho-alpha-D-ribose 1-diphosphate: step 1/9. Catalyzes the condensation of ATP and 5-phosphoribose 1-diphosphate to form N'-(5'-phosphoribosyl)-ATP (PR-ATP). Has a crucial role in the pathway because the rate of histidine biosynthesis seems to be controlled primarily by regulation of HisG enzymatic activity. The protein is ATP phosphoribosyltransferase of Clostridium botulinum (strain 657 / Type Ba4).